Consider the following 194-residue polypeptide: MIILGVDPGLTRCGVGVIEAGEHRRLSFIHVDVVRSSPDITQDLRLLAIYNGLSEKMDRFAPDAVSIERVFAQSNRNTVLGTAQAAGLAMLAAAQRNIPVALHTPTEAKLAITGNGQAQKIQVERMVTRILNLTKMPTPADAADALALAICHALRPAGALQGGEREQHLTAAQRQWAEAAQNSTRRRINHDRGM.

Catalysis depends on residues Asp7, Glu68, and Asp141. Asp7, Glu68, and Asp141 together coordinate Mg(2+).

The protein belongs to the RuvC family. As to quaternary structure, homodimer which binds Holliday junction (HJ) DNA. The HJ becomes 2-fold symmetrical on binding to RuvC with unstacked arms; it has a different conformation from HJ DNA in complex with RuvA. In the full resolvosome a probable DNA-RuvA(4)-RuvB(12)-RuvC(2) complex forms which resolves the HJ. It depends on Mg(2+) as a cofactor.

The protein localises to the cytoplasm. The enzyme catalyses Endonucleolytic cleavage at a junction such as a reciprocal single-stranded crossover between two homologous DNA duplexes (Holliday junction).. The RuvA-RuvB-RuvC complex processes Holliday junction (HJ) DNA during genetic recombination and DNA repair. Endonuclease that resolves HJ intermediates. Cleaves cruciform DNA by making single-stranded nicks across the HJ at symmetrical positions within the homologous arms, yielding a 5'-phosphate and a 3'-hydroxyl group; requires a central core of homology in the junction. The consensus cleavage sequence is 5'-(A/T)TT(C/G)-3'. Cleavage occurs on the 3'-side of the TT dinucleotide at the point of strand exchange. HJ branch migration catalyzed by RuvA-RuvB allows RuvC to scan DNA until it finds its consensus sequence, where it cleaves and resolves the cruciform DNA. The protein is Crossover junction endodeoxyribonuclease RuvC of Bifidobacterium longum (strain DJO10A).